Reading from the N-terminus, the 394-residue chain is Putative fimbrial assembly protein FimD, serogroup D (394 aa).

This is Putative fimbrial assembly protein FimD, serogroup D (fimD) from Dichelobacter nodosus (Bacteroides nodosus).